The chain runs to 269 residues: Eukaryotic translation initiation factor 3 subunit G-1 (269 aa).

Residues 188 to 266 (AAIRISNLSE…LILSVEWSKP (79 aa)) form the RRM domain.

The protein belongs to the eIF-3 subunit G family. In terms of assembly, component of the eukaryotic translation initiation factor 3 (eIF-3) complex. The eIF-3 complex interacts with pix.

It localises to the cytoplasm. In terms of biological role, RNA-binding component of the eukaryotic translation initiation factor 3 (eIF-3) complex, which is involved in protein synthesis of a specialized repertoire of mRNAs and, together with other initiation factors, stimulates binding of mRNA and methionyl-tRNAi to the 40S ribosome. The eIF-3 complex specifically targets and initiates translation of a subset of mRNAs involved in cell proliferation. This subunit can bind 18S rRNA. The polypeptide is Eukaryotic translation initiation factor 3 subunit G-1 (Drosophila mojavensis (Fruit fly)).